A 501-amino-acid chain; its full sequence is Glutamate--tRNA ligase (501 aa).

The 'HIGH' region motif lies at 10–20; sequence PSPTGSLHIGG. The 'KMSKS' region motif lies at 251–255; sequence KLSKR. Lys254 contacts ATP.

It belongs to the class-I aminoacyl-tRNA synthetase family. Glutamate--tRNA ligase type 1 subfamily. In terms of assembly, monomer.

The protein localises to the cytoplasm. It catalyses the reaction tRNA(Glu) + L-glutamate + ATP = L-glutamyl-tRNA(Glu) + AMP + diphosphate. Catalyzes the attachment of glutamate to tRNA(Glu) in a two-step reaction: glutamate is first activated by ATP to form Glu-AMP and then transferred to the acceptor end of tRNA(Glu). The polypeptide is Glutamate--tRNA ligase (Desulforudis audaxviator (strain MP104C)).